Consider the following 215-residue polypeptide: LexA repressor (215 aa).

Positions 28-48 (RAEIAAELGFSSPNAAEEHLR) form a DNA-binding region, H-T-H motif. Residues S133 and K170 each act as for autocatalytic cleavage activity in the active site.

This sequence belongs to the peptidase S24 family. Homodimer.

It catalyses the reaction Hydrolysis of Ala-|-Gly bond in repressor LexA.. Functionally, represses a number of genes involved in the response to DNA damage (SOS response), including recA and lexA. In the presence of single-stranded DNA, RecA interacts with LexA causing an autocatalytic cleavage which disrupts the DNA-binding part of LexA, leading to derepression of the SOS regulon and eventually DNA repair. The chain is LexA repressor from Burkholderia cenocepacia (strain HI2424).